A 627-amino-acid polypeptide reads, in one-letter code: Glycerophosphodiester phosphodiesterase domain-containing protein 4 (627 aa).

The Cytoplasmic portion of the chain corresponds to 1-17 (MLLFLWIETSNEYFNFD). A helical membrane pass occupies residues 18-38 (WVIFLGTGYWFYWSIFILSLA). Position 39 (G39) is a topological domain, extracellular. A helical transmembrane segment spans residues 40-60 (ILTAYSSLLLLLGLLLLWEGI). The Cytoplasmic segment spans residues 61–69 (ELYLHLCHK). The helical transmembrane segment at 70–90 (ILILLVILPCVILMFIICKFW) threads the bilayer. At 91–107 (KERWLVAGLSLQIFAPY) the chain is on the extracellular side. Residues 108–128 (VHLVSITVMVILFWPVAIYVA) form a helical membrane-spanning segment. Topologically, residues 129–162 (RLEREVRMRRYRMTHSEKKRLKKCNVIARLRGLQ) are cytoplasmic. Residues 163–183 (VAVGLPFLLIFLSLCLMPLGI) traverse the membrane as a helical segment. At 184–468 (YSPCIQEKEN…PHFFMTPKFY (285 aa)) the chain is on the extracellular side. A GP-PDE domain is found at 198-457 (PTLFGHRGAP…DNIGLLSQLN (260 aa)). Residues E230, D232, and H245 each contribute to the a divalent metal cation site. N-linked (GlcNAc...) asparagine glycans are attached at residues N308 and N397. The chain crosses the membrane as a helical span at residues 469 to 489 (MFIWLLVDIISVLFIVAIFCF). Residues 490-627 (HWRRETIKEK…TMPSVEVPYP (138 aa)) lie on the Cytoplasmic side of the membrane.

It belongs to the glycerophosphoryl diester phosphodiesterase family.

Its subcellular location is the membrane. The sequence is that of Glycerophosphodiester phosphodiesterase domain-containing protein 4 (GDPD4) from Macaca fascicularis (Crab-eating macaque).